The chain runs to 862 residues: Probable linoleate 9S-lipoxygenase 5 (862 aa).

The PLAT domain occupies 36–161; the sequence is NDVNASLLDG…KYKSERIFFA (126 aa). The 699-residue stretch at 164–862 folds into the Lipoxygenase domain; that stretch reads AYLPGETPEP…GKGIPNSVSI (699 aa). The Fe cation site is built by H523, H528, H714, N718, and I862.

The protein belongs to the lipoxygenase family. Monomer. It depends on Fe cation as a cofactor. In terms of tissue distribution, not detected in leaves, stems, flowers, roots, tubers and stolons during normal growth and development.

It localises to the cytoplasm. The catalysed reaction is (9Z,12Z)-octadecadienoate + O2 = (9S)-hydroperoxy-(10E,12Z)-octadecadienoate. Its pathway is lipid metabolism; oxylipin biosynthesis. Plant lipoxygenases may be involved in a number of diverse aspects of plant physiology including growth and development, pest resistance, and senescence or responses to wounding. May contribute to cell death during the hypersensitive response (HR) by the massive production of free fatty acid hydroperoxides. Catalyzes the hydroperoxidation of lipids containing a cis,cis-1,4-pentadiene structure. The protein is Probable linoleate 9S-lipoxygenase 5 (LOX1.5) of Solanum tuberosum (Potato).